The chain runs to 81 residues: MSQKSVVLHLYRSLVRESKKFSSYNFREYSLRRVSVGFRENKNKDQNETKELIQDALKNLEMVKRQAFINSMYSTNKLVVE.

This sequence belongs to the complex I LYR family.

It is found in the mitochondrion. The protein localises to the nucleus. It participates in cofactor biosynthesis; iron-sulfur cluster biosynthesis. Required for nuclear and mitochondrial iron-sulfur protein biosynthesis. This is LYR motif-containing protein 4 (lyrm4) from Dictyostelium discoideum (Social amoeba).